The primary structure comprises 311 residues: Aspartate carbamoyltransferase catalytic subunit (311 aa).

Residues Arg-58 and Thr-59 each contribute to the carbamoyl phosphate site. L-aspartate is bound at residue Lys-86. Carbamoyl phosphate is bound by residues Arg-108, His-136, and Gln-139. Residues Arg-169 and Arg-223 each coordinate L-aspartate. Residues Gly-264 and Pro-265 each coordinate carbamoyl phosphate.

The protein belongs to the aspartate/ornithine carbamoyltransferase superfamily. ATCase family. In terms of assembly, heterododecamer (2C3:3R2) of six catalytic PyrB chains organized as two trimers (C3), and six regulatory PyrI chains organized as three dimers (R2).

The enzyme catalyses carbamoyl phosphate + L-aspartate = N-carbamoyl-L-aspartate + phosphate + H(+). Its pathway is pyrimidine metabolism; UMP biosynthesis via de novo pathway; (S)-dihydroorotate from bicarbonate: step 2/3. In terms of biological role, catalyzes the condensation of carbamoyl phosphate and aspartate to form carbamoyl aspartate and inorganic phosphate, the committed step in the de novo pyrimidine nucleotide biosynthesis pathway. This chain is Aspartate carbamoyltransferase catalytic subunit, found in Pelodictyon phaeoclathratiforme (strain DSM 5477 / BU-1).